Consider the following 465-residue polypeptide: Putative F-box protein At1g21990 (465 aa).

One can recognise an F-box domain in the interval R8–T54.

This Arabidopsis thaliana (Mouse-ear cress) protein is Putative F-box protein At1g21990.